Reading from the N-terminus, the 357-residue chain is Peptide chain release factor 1 (357 aa).

Gln233 is subject to N5-methylglutamine. A disordered region spans residues 284 to 305 (RSASISADRKSQVGTGDRSERI).

The protein belongs to the prokaryotic/mitochondrial release factor family. In terms of processing, methylated by PrmC. Methylation increases the termination efficiency of RF1.

The protein resides in the cytoplasm. Functionally, peptide chain release factor 1 directs the termination of translation in response to the peptide chain termination codons UAG and UAA. This chain is Peptide chain release factor 1, found in Clostridium novyi (strain NT).